Reading from the N-terminus, the 332-residue chain is Lipoyl synthase (332 aa).

7 residues coordinate [4Fe-4S] cluster: C74, C79, C85, C100, C104, C107, and S314. Residues 85–303 enclose the Radical SAM core domain; sequence CFGKGTATFM…EEKAYEMGFS (219 aa).

It belongs to the radical SAM superfamily. Lipoyl synthase family. [4Fe-4S] cluster is required as a cofactor.

It localises to the cytoplasm. The enzyme catalyses [[Fe-S] cluster scaffold protein carrying a second [4Fe-4S](2+) cluster] + N(6)-octanoyl-L-lysyl-[protein] + 2 oxidized [2Fe-2S]-[ferredoxin] + 2 S-adenosyl-L-methionine + 4 H(+) = [[Fe-S] cluster scaffold protein] + N(6)-[(R)-dihydrolipoyl]-L-lysyl-[protein] + 4 Fe(3+) + 2 hydrogen sulfide + 2 5'-deoxyadenosine + 2 L-methionine + 2 reduced [2Fe-2S]-[ferredoxin]. Its pathway is protein modification; protein lipoylation via endogenous pathway; protein N(6)-(lipoyl)lysine from octanoyl-[acyl-carrier-protein]: step 2/2. In terms of biological role, catalyzes the radical-mediated insertion of two sulfur atoms into the C-6 and C-8 positions of the octanoyl moiety bound to the lipoyl domains of lipoate-dependent enzymes, thereby converting the octanoylated domains into lipoylated derivatives. The polypeptide is Lipoyl synthase (Polaromonas naphthalenivorans (strain CJ2)).